The chain runs to 248 residues: MGESTSLKEILSTLTKRILLIMIVTAAATAAGGLISFFALTPIYENSTQILVNQSKNERKEVQFNDVQTNLQLINTYNVIIKSPAILDEVIKEMGLSMTSQELNDKITVSSEQDSQVVNISVRDENAETAAHIANTIASVFQDKITSIMNVDNVSILSKAEVSEHPSPVSPKPLLNIAIAFAAGLAGSIGLAFLLEHLDNTIKSEEQLESLLDIPVLGTVSTIANEQKTAKTLQGFQSEKTGSGHFGA.

2 helical membrane-spanning segments follow: residues 18-38 (ILLI…ISFF) and 174-194 (LLNI…LAFL).

This sequence belongs to the CpsC/CapA family. Not phosphorylated in vitro by YwqD.

Its subcellular location is the cell membrane. It functions in the pathway capsule biogenesis; capsule polysaccharide biosynthesis. Functionally, required for YwqD kinase activity. May bring YwqD and its substrates into contact. Probably involved in the regulation of capsular polysaccharide biosynthesis. The polypeptide is Probable capsular polysaccharide biosynthesis protein YwqC (ywqC) (Bacillus subtilis (strain 168)).